The primary structure comprises 596 residues: Actin-related protein 9 (596 aa).

Residues 148–178 form a disordered region; the sequence is LASPAETSPDKGDASASEAVPDVTDSKDTSE.

It belongs to the actin family. ARP8 subfamily.

This chain is Actin-related protein 9 (ARP9), found in Arabidopsis thaliana (Mouse-ear cress).